Reading from the N-terminus, the 425-residue chain is MLNIKWIRENQKLFDEKLSQRFIEPMSSKIAMLDREKRKIMSLIQEFQHARKVKSKILGNMASKSGEEFEGLQRDVKHINEKLEALEQDLNNNNELNELLNMFPNIPDEEVPYGMDESMNKLVRTYGETNPNALNKQHFELGIKLNLMDFEQTAKISGTRFVTLKGDLAKLERALINFMIDVHTKELDFFEISPPVLVRDNAMYNAGQLPKFAEESFATTNGYRLIPTAEVPLVNIVADTIIPREKLPMRYVAYTPCFRSEAGSSGRDTRGMIRLHQFGKVELVSITTPEESKNEHEYITNASETILQKLNLPYRVMLLCTGDMGFAAKKTYDIEVWLPGQKQYREIASCSNCGDFQARRMKARYKEFGSNETTLVHTLNASGLPIGRTMVAILENYQNEDGSITIPDVLINYMGGLQKITAYSE.

228 to 230 (TAE) is an L-serine binding site. An ATP-binding site is contributed by 259 to 261 (RSE). An L-serine-binding site is contributed by E282. ATP is bound at residue 346–349 (EIAS). L-serine is bound at residue S382.

Belongs to the class-II aminoacyl-tRNA synthetase family. Type-1 seryl-tRNA synthetase subfamily. As to quaternary structure, homodimer. The tRNA molecule binds across the dimer.

It localises to the cytoplasm. The enzyme catalyses tRNA(Ser) + L-serine + ATP = L-seryl-tRNA(Ser) + AMP + diphosphate + H(+). It carries out the reaction tRNA(Sec) + L-serine + ATP = L-seryl-tRNA(Sec) + AMP + diphosphate + H(+). It functions in the pathway aminoacyl-tRNA biosynthesis; selenocysteinyl-tRNA(Sec) biosynthesis; L-seryl-tRNA(Sec) from L-serine and tRNA(Sec): step 1/1. Its function is as follows. Catalyzes the attachment of serine to tRNA(Ser). Is also able to aminoacylate tRNA(Sec) with serine, to form the misacylated tRNA L-seryl-tRNA(Sec), which will be further converted into selenocysteinyl-tRNA(Sec). The chain is Serine--tRNA ligase from Rickettsia massiliae (strain Mtu5).